The primary structure comprises 166 residues: Large ribosomal subunit protein uL10 (166 aa).

Belongs to the universal ribosomal protein uL10 family. As to quaternary structure, part of the ribosomal stalk of the 50S ribosomal subunit. The N-terminus interacts with L11 and the large rRNA to form the base of the stalk. The C-terminus forms an elongated spine to which L12 dimers bind in a sequential fashion forming a multimeric L10(L12)X complex.

Functionally, forms part of the ribosomal stalk, playing a central role in the interaction of the ribosome with GTP-bound translation factors. The sequence is that of Large ribosomal subunit protein uL10 from Streptococcus gordonii (strain Challis / ATCC 35105 / BCRC 15272 / CH1 / DL1 / V288).